The sequence spans 698 residues: Auxin response factor 22 (698 aa).

Positions 128 to 230 (FAKTLTQSDA…ELCVGIRRAK (103 aa)) form a DNA-binding region, TF-B3. Polar residues predominate over residues 549 to 577 (TSSGSTETLSPGVTGNSSPNGNAHKTGNA). The segment at 549–579 (TSSGSTETLSPGVTGNSSPNGNAHKTGNASD) is disordered. Residues 603 to 683 (AGHCKVFMES…RRLTIIAGDR (81 aa)) form the PB1 domain.

Belongs to the ARF family. In terms of assembly, homodimers and heterodimers. Expressed in roots, culms, leaves and young panicles.

The protein resides in the nucleus. Auxin response factors (ARFs) are transcriptional factors that bind specifically to the DNA sequence 5'-TGTCTC-3' found in the auxin-responsive promoter elements (AuxREs). The polypeptide is Auxin response factor 22 (ARF22) (Oryza sativa subsp. japonica (Rice)).